The sequence spans 354 residues: NADH-ubiquinone oxidoreductase chain 1 (354 aa).

The next 8 membrane-spanning stretches (helical) occupy residues 43-63 (LFWSLSFYVVVLLSVAYLTLF), 108-128 (PALFFLGPCFMLLHSFILWGC), 139-159 (FFWGGLYVLSVLSVGVYGVVL), 180-200 (VISYEVMLVFLYLCPFFVVGS), 211-231 (VSGCNGGVLFLVLPWWVFCVL), 264-284 (IFIAEYSNILFLSTLTSVLFL), 298-318 (LISSSVIGSFFSFMVVFLIVL), and 334-354 (LIWCQILPILMSCFALFLMII).

The protein belongs to the complex I subunit 1 family.

The protein localises to the mitochondrion inner membrane. It carries out the reaction a ubiquinone + NADH + 5 H(+)(in) = a ubiquinol + NAD(+) + 4 H(+)(out). Functionally, core subunit of the mitochondrial membrane respiratory chain NADH dehydrogenase (Complex I) that is believed to belong to the minimal assembly required for catalysis. Complex I functions in the transfer of electrons from NADH to the respiratory chain. The immediate electron acceptor for the enzyme is believed to be ubiquinone. This Pecten maximus (King scallop) protein is NADH-ubiquinone oxidoreductase chain 1 (ND1).